Here is a 172-residue protein sequence, read N- to C-terminus: Ribosome maturation factor RimM (172 aa).

Residues 96–168 (EGEFYYHQII…RVDVELMEGL (73 aa)) form the PRC barrel domain.

Belongs to the RimM family. Binds ribosomal protein uS19.

The protein localises to the cytoplasm. Functionally, an accessory protein needed during the final step in the assembly of 30S ribosomal subunit, possibly for assembly of the head region. Essential for efficient processing of 16S rRNA. May be needed both before and after RbfA during the maturation of 16S rRNA. It has affinity for free ribosomal 30S subunits but not for 70S ribosomes. The sequence is that of Ribosome maturation factor RimM from Streptococcus pyogenes serotype M3 (strain ATCC BAA-595 / MGAS315).